Consider the following 156-residue polypeptide: Rhodanese-like domain-containing protein 17 (156 aa).

Residues 44-146 (LDSGYTFLDV…WVNKRFPVKV (103 aa)) form the Rhodanese domain. Cysteine 106 functions as the Cysteine persulfide intermediate in the catalytic mechanism.

The sequence is that of Rhodanese-like domain-containing protein 17 (STR17) from Arabidopsis thaliana (Mouse-ear cress).